Reading from the N-terminus, the 90-residue chain is Small ribosomal subunit protein uS15 (90 aa).

The protein belongs to the universal ribosomal protein uS15 family. Part of the 30S ribosomal subunit. Forms a bridge to the 50S subunit in the 70S ribosome, contacting the 23S rRNA.

In terms of biological role, one of the primary rRNA binding proteins, it binds directly to 16S rRNA where it helps nucleate assembly of the platform of the 30S subunit by binding and bridging several RNA helices of the 16S rRNA. Its function is as follows. Forms an intersubunit bridge (bridge B4) with the 23S rRNA of the 50S subunit in the ribosome. The chain is Small ribosomal subunit protein uS15 from Campylobacter lari (strain RM2100 / D67 / ATCC BAA-1060).